The primary structure comprises 290 residues: Arylamine N-acetyltransferase 2 (290 aa).

The active-site Acyl-thioester intermediate is the cysteine 68. Threonine 103 and glycine 104 together coordinate CoA. Residue 106–107 participates in substrate binding; the sequence is IH. Active-site residues include histidine 107 and aspartate 122. 3 residues coordinate CoA: tyrosine 208, threonine 214, and serine 287.

Belongs to the arylamine N-acetyltransferase family.

The protein resides in the cytoplasm. It carries out the reaction an arylamine + acetyl-CoA = an N-acetylarylamine + CoA. The enzyme catalyses an N-hydroxyarylamine + acetyl-CoA = an N-acetoxyarylamine + CoA. Its function is as follows. Catalyzes the N- or O-acetylation of various arylamine and heterocyclic amine substrates, and participates in the detoxification of a plethora of hydrazine and arylamine drugs. The polypeptide is Arylamine N-acetyltransferase 2 (NAT2) (Macaca mulatta (Rhesus macaque)).